Consider the following 319-residue polypeptide: uncharacterized protein (319 aa).

An MPN domain is found at 29 to 164 (VNISSLALLK…LDAFRSVNPL (136 aa)). Zn(2+)-binding residues include H111, H113, and D124. A JAMM motif motif is present at residues 111–124 (HSHPGFGCWLSSVD).

This sequence belongs to the peptidase M67A family.

This is an uncharacterized protein from Caenorhabditis elegans.